The sequence spans 204 residues: Large ribosomal subunit protein uL4 (204 aa).

A disordered region spans residues 49–90 (KVKGMGEVSGTTKKPYRQKGTGSARQGSLRAPQYRTGGAVHG).

This sequence belongs to the universal ribosomal protein uL4 family. In terms of assembly, part of the 50S ribosomal subunit.

Functionally, one of the primary rRNA binding proteins, this protein initially binds near the 5'-end of the 23S rRNA. It is important during the early stages of 50S assembly. It makes multiple contacts with different domains of the 23S rRNA in the assembled 50S subunit and ribosome. Its function is as follows. Forms part of the polypeptide exit tunnel. This Gluconacetobacter diazotrophicus (strain ATCC 49037 / DSM 5601 / CCUG 37298 / CIP 103539 / LMG 7603 / PAl5) protein is Large ribosomal subunit protein uL4.